A 350-amino-acid chain; its full sequence is Meiotic driver wtf30 (350 aa).

The interval 1-92 (MKNKYYPLRS…RENHSSGTTD (92 aa)) is disordered. Positions 11-29 (SIDELSTKNDNEIDLEKGP) are enriched in basic and acidic residues. The span at 57-72 (GANNPNLFNTDESTTP) shows a compositional bias: polar residues. Helical transmembrane passes span 97–117 (FLIK…PAVC), 134–154 (WVYF…LWCF), 165–185 (CVKV…IGLF), 190–210 (EMMI…FVYI), 226–246 (CTIS…FWTF), 253–273 (LAKV…TMFL), and 280–300 (WTGC…LFLC).

It belongs to the WTF family. Homomer. Forms protein aggregates. The two isoforms can interact with each other and with themselves. High sequence similarity is required for their interaction.

The protein localises to the spore membrane. It localises to the vacuole membrane. Its subcellular location is the ascus epiplasm. It is found in the cytoplasm. The protein resides in the endoplasmic reticulum membrane. Its function is as follows. Promotes unequal transmission of alleles from the parental zygote to progeny spores by acting as poison/antidote system where the poison and antidote proteins are produced from the same locus; the poison component is trans-acting and targets all spores within an ascus whereas the antidote component is spore-specific, leading to poisoning of all progeny that do not inherit the allele. Localizes isoform 2 to the vacuole thereby facilitating its degradation. Functionally, forms toxic aggregates that disrupt spore maturation. The sequence is that of Meiotic driver wtf30 from Schizosaccharomyces kambucha (Fission yeast).